A 432-amino-acid chain; its full sequence is UDP-N-acetylmuramate--L-alanine ligase (432 aa).

An ATP-binding site is contributed by 108 to 114 (GAHGKTS).

The protein belongs to the MurCDEF family.

It is found in the cytoplasm. It catalyses the reaction UDP-N-acetyl-alpha-D-muramate + L-alanine + ATP = UDP-N-acetyl-alpha-D-muramoyl-L-alanine + ADP + phosphate + H(+). It functions in the pathway cell wall biogenesis; peptidoglycan biosynthesis. Functionally, cell wall formation. The chain is UDP-N-acetylmuramate--L-alanine ligase from Bacillus velezensis (strain DSM 23117 / BGSC 10A6 / LMG 26770 / FZB42) (Bacillus amyloliquefaciens subsp. plantarum).